A 240-amino-acid chain; its full sequence is Uridylate kinase (240 aa).

14-17 (KLSG) lines the ATP pocket. G56 serves as a coordination point for UMP. ATP contacts are provided by G57 and R61. Residues D76 and 137–144 (TGNPFFTT) each bind UMP. Positions 164, 170, and 173 each coordinate ATP.

This sequence belongs to the UMP kinase family. As to quaternary structure, homohexamer.

It is found in the cytoplasm. It catalyses the reaction UMP + ATP = UDP + ADP. The protein operates within pyrimidine metabolism; CTP biosynthesis via de novo pathway; UDP from UMP (UMPK route): step 1/1. Inhibited by UTP. Its function is as follows. Catalyzes the reversible phosphorylation of UMP to UDP. The polypeptide is Uridylate kinase (Verminephrobacter eiseniae (strain EF01-2)).